The primary structure comprises 303 residues: MSSTLSENQAPETGTARVKRGMAEQLKGGVIMDVVTPEQAKIAEDAGAVAVMALERVPADIRKDGGVARMSDPDMIEGIIGAVSIPVMAKSRIGHFVEAQVLQSLGVDYIDESEVLTPADEVNHSDKFAFTTPFVCGATNLGEALRRIAEGAAMIRSKGEAGTGNVVEAVRHLRQIKNEIARLRGYDNNELYAAAKELRAPYELVKEVSELGRLPVVLFSAGGVATPADAALMRQLGAEGVFVGSGIFKSGDPAKRAAAIVKATTFYDDPKIIADASRNLGEAMVGINCDTLPETERYANRGW.

Residue Asp-33 participates in D-ribose 5-phosphate binding. Lys-90 functions as the Schiff-base intermediate with D-ribose 5-phosphate in the catalytic mechanism. Gly-162 contributes to the D-ribose 5-phosphate binding site. Arg-174 serves as a coordination point for D-glyceraldehyde 3-phosphate. D-ribose 5-phosphate is bound by residues Gly-223 and 244–245 (GS).

The protein belongs to the PdxS/SNZ family. As to quaternary structure, in the presence of PdxT, forms a dodecamer of heterodimers.

The catalysed reaction is aldehydo-D-ribose 5-phosphate + D-glyceraldehyde 3-phosphate + L-glutamine = pyridoxal 5'-phosphate + L-glutamate + phosphate + 3 H2O + H(+). It participates in cofactor biosynthesis; pyridoxal 5'-phosphate biosynthesis. Functionally, catalyzes the formation of pyridoxal 5'-phosphate from ribose 5-phosphate (RBP), glyceraldehyde 3-phosphate (G3P) and ammonia. The ammonia is provided by the PdxT subunit. Can also use ribulose 5-phosphate and dihydroxyacetone phosphate as substrates, resulting from enzyme-catalyzed isomerization of RBP and G3P, respectively. In Streptomyces coelicolor (strain ATCC BAA-471 / A3(2) / M145), this protein is Pyridoxal 5'-phosphate synthase subunit PdxS.